Here is a 460-residue protein sequence, read N- to C-terminus: MEIDLEKFKRIHFIGIGGISMSGLAHILLEEGHTITGSDIKNSHLIERLEKEGAKINIPHMAESVIGADLVVYTAAIHDDNVEYQKAKELGIPIIDRATLLGLIMKKYKFGVAVAGSHGKTTTTSLISVILDRAGYDPTVLVGGEIDAIGGNVRVGKSEYFVTEACEYTDSFLKFYPYIAVILNVDSDHLDYFKNIDNIKQSFRQFASLVPSDGFVVACKDDANTMHVIKGLEKNIVTYGINEKSDWQAKDITYDEKGCASFNVYYRGKFIGHFKLSIPGKHNIYNALASLAVTYLLGVDTEKAKEYIKEFKGTHRRFEVKGVVEGVTVVDDYAHHPAEIHATLEAAKNYPHKRIIAIFQPHTYSRTKALLSDFAESFDAADKIIITDIYAAREKDTGIVSSKDLVDLIFKRGKDVLYIKDFDSIVEYLKENTEEGDLVLTIGAGNIYEVGEKFLEENKK.

ATP is bound at residue 116-122; the sequence is GSHGKTT.

It belongs to the MurCDEF family.

It is found in the cytoplasm. The catalysed reaction is UDP-N-acetyl-alpha-D-muramate + L-alanine + ATP = UDP-N-acetyl-alpha-D-muramoyl-L-alanine + ADP + phosphate + H(+). The protein operates within cell wall biogenesis; peptidoglycan biosynthesis. Functionally, cell wall formation. This chain is UDP-N-acetylmuramate--L-alanine ligase, found in Caldanaerobacter subterraneus subsp. tengcongensis (strain DSM 15242 / JCM 11007 / NBRC 100824 / MB4) (Thermoanaerobacter tengcongensis).